The sequence spans 244 residues: Gasdermin-like protein rcd-1-2 (244 aa).

The interval 1–22 (MDNEEWFPLKQTHYPPPTIPSM) is disordered.

The protein belongs to the gasdermin family. As to quaternary structure, heterooligomer; the heterooligomer with rcd-1-1 forms a ring-shaped pore complex when inserted in the membrane.

It is found in the cytoplasm. Its subcellular location is the cell membrane. Functionally, gasdermin-like protein involved in heterokaryon incompatibility, a process that ensures that during spontaneous vegetative cell fusion, only compatible cells from the same colony survive (non-self-recognition). In N.crassa, the rcd-1 locus exists as 2 incompatible alleles, rcd-1-1 (AC Q7SBA0) and rcd-1-2 (this entry). During the allorecognition process, forms a heterooligomer with rcd-1-1, thereby forming a functional gasdermin-like complex that binds to membranes and forms pores, triggering cell death. Binds negatively charged phospholipids, such as cardiolipin and phosphatidylserine. Also binds to phosphoinositides, preferentially to phosphatidylinositol-3-phosphate (PtdIns-3-P), PtdIns-5-P and PtdIns-3,5-P2. In Neurospora crassa, this protein is Gasdermin-like protein rcd-1-2.